Reading from the N-terminus, the 372-residue chain is NAD(P)H-quinone oxidoreductase subunit 1 (372 aa).

Helical transmembrane passes span 31–51, 65–85, 97–117, 128–148, 176–196, 254–276, 304–324, and 347–367; these read PLPMLIMLLAATVSVLVVVWL, PEFIGPLGVLAPLADGLKLVL, LLFTLGPAIVVIPVFLSYLIL, VGLGIFLWIALSSVVPIGLLM, LALSVLAVVMMSNSLSTVDIV, FALFYLGSYVNLTLSALLFAVLY, LIFATIGIGMTLLKAYFLIFL, and FLLPVSLVNLLITAGLKLAFP.

This sequence belongs to the complex I subunit 1 family. NDH-1 is composed of at least 11 different subunits.

The protein resides in the cellular thylakoid membrane. It carries out the reaction a plastoquinone + NADH + (n+1) H(+)(in) = a plastoquinol + NAD(+) + n H(+)(out). It catalyses the reaction a plastoquinone + NADPH + (n+1) H(+)(in) = a plastoquinol + NADP(+) + n H(+)(out). In terms of biological role, NDH-1 shuttles electrons from an unknown electron donor, via FMN and iron-sulfur (Fe-S) centers, to quinones in the respiratory and/or the photosynthetic chain. The immediate electron acceptor for the enzyme in this species is believed to be plastoquinone. Couples the redox reaction to proton translocation, and thus conserves the redox energy in a proton gradient. This Leptolyngbya boryana (Plectonema boryanum) protein is NAD(P)H-quinone oxidoreductase subunit 1.